The following is a 140-amino-acid chain: Small ribosomal subunit protein eS12 (140 aa).

This sequence belongs to the eukaryotic ribosomal protein eS12 family. As to quaternary structure, part of the small subunit (SSU) processome, composed of more than 70 proteins and the RNA chaperone small nucleolar RNA (snoRNA) U3. Subunit of the 40S ribosomal complex.

It is found in the nucleus. It localises to the nucleolus. In terms of biological role, part of the small subunit (SSU) processome, first precursor of the small eukaryotic ribosomal subunit. During the assembly of the SSU processome in the nucleolus, many ribosome biogenesis factors, an RNA chaperone and ribosomal proteins associate with the nascent pre-rRNA and work in concert to generate RNA folding, modifications, rearrangements and cleavage as well as targeted degradation of pre-ribosomal RNA by the RNA exosome. Subunit of the 40S ribosomal complex. Involved in cold-warm shock-induced translocation of the RNA exosome components from the nucleolus to nucleoplasm. The polypeptide is Small ribosomal subunit protein eS12 (rps-12) (Caenorhabditis elegans).